A 236-amino-acid chain; its full sequence is Transcription repressor MYB6 (236 aa).

2 consecutive HTH myb-type domains span residues 9–61 (KAHT…INYL) and 62–116 (RPDL…KRKL). 2 DNA-binding regions (H-T-H motif) span residues 37–61 (WRSL…INYL) and 89–112 (WSLI…NTHI). The segment at 159–181 (PKTENSSDNGASTSGTTTDEDLR) is disordered. Residues 162–175 (ENSSDNGASTSGTT) are compositionally biased toward polar residues.

Interacts with BHLH012/MYC1 and BHLH042/TT8. In terms of tissue distribution, expressed in roots, stems, flower buds, and siliques.

It localises to the nucleus. In Arabidopsis thaliana (Mouse-ear cress), this protein is Transcription repressor MYB6 (MYB6).